We begin with the raw amino-acid sequence, 798 residues long: Protocadherin beta-14 (798 aa).

An N-terminal signal peptide occupies residues 1 to 26 (MEIRGALDLRKRQVLIFLVLLGLSRA). Residues 27–686 (GTESAHYSVA…APAQAQADSL (660 aa)) lie on the Extracellular side of the membrane. Cadherin domains lie at 35 to 133 (VAEE…SPTF), 138 to 242 (ILIK…APEF), 247 to 347 (YEVQ…PPEV), 352 to 451 (ITKR…APAF), and 456 to 561 (YTLF…SPFV). A disulfide bond links Cys-96 and Cys-102. An N-linked (GlcNAc...) asparagine glycan is attached at Asn-169. N-linked (GlcNAc...) asparagine glycosylation is found at Asn-359, Asn-418, and Asn-436. N-linked (GlcNAc...) asparagine glycosylation occurs at Asn-567. The region spanning 568 to 671 (GSAPCTELVP…LVDGFSQPYL (104 aa)) is the Cadherin 6 domain. Residues 687–711 (TVYLVVALASVSSLFLFSVLLFVAV) traverse the membrane as a helical segment. Over 712–798 (RLCRRSRAAS…FRNSFGLNIQ (87 aa)) the chain is Cytoplasmic.

It localises to the cell membrane. In terms of biological role, potential calcium-dependent cell-adhesion protein. May be involved in the establishment and maintenance of specific neuronal connections in the brain. The chain is Protocadherin beta-14 (PCDHB14) from Pan troglodytes (Chimpanzee).